The following is a 784-amino-acid chain: Toll-like receptor 2 (784 aa).

The signal sequence occupies residues 1-20; sequence MPRALWTAWVWAVIILSTEG. The Extracellular portion of the chain corresponds to 21–587; that stretch reads ASDQASSLSC…ARLSLSECHR (567 aa). Cys30 and Cys36 are oxidised to a cystine. LRR repeat units lie at residues 54–77, 78–101, 102–125, 126–150, 151–175, 176–199, 200–223, 224–250, 251–278, 279–308, 309–337, 338–361, 362–388, 389–414, 415–437, 438–457, 458–478, 479–500, and 501–524; these read VKSLDLSNNDITYVGNRDLQRCVN, LKTLRLGANEIHTVEEDSFFHLRN, LEYLDLSYNRLSNLSSSWFRSLYV, LKFLNLLGNLYKTLGETSLFSHLPN, LRTLKVGNSNSFTEIHEKDFTGLTF, LEELEISAQNLQIYVPKSLKSIQN, ISHLILHLKQPILLVDILVDIVSS, LDCFELRDTNLHTFHFSEASISEMSTS, VKKLIFRNVQFTDESFVEVVKLFNYVSG, ILEVEFDDCTHDGIGDFRALSLDRIRHLGN, VETLTIRKLHIPQFFLFHDLSSIYPLTGR, VKRVTIENSKVFLVPCLLSQHLKS, LEYLDLSENLMSEETLKNSACKDAWPF, LQTLVLRQNRLKSLEKTGELLLTLEN, LNNLDISKNNFLSMPETCQWPGK, MKQLNLSSTRIHSLTQCLPQ, TLEILDVSNNNLDSFSLILPQ, LKELYISRNKLKTLPDASFLPV, and LSVMRISRNIINTFSKEQLDSFQQ. Asn114 carries N-linked (GlcNAc...) asparagine glycosylation. Asn199 carries N-linked (GlcNAc...) asparagine glycosylation. Cysteines 353 and 382 form a disulfide. An intrachain disulfide couples Cys432 to Cys454. Asn442 carries N-linked (GlcNAc...) asparagine glycosylation. The 55-residue stretch at 525–579 folds into the LRRCT domain; the sequence is LKTLEAGGNNFICSCDFLSFTQGQQALGRVLVDWPDDYRCDSPSHVRGQRVQDAR. The chain crosses the membrane as a helical span at residues 588 to 608; sequence AAVVSAACCALFLLLLLTGVL. Over 609 to 784 the chain is Cytoplasmic; sequence CHRFHGLWYM…WLNLRAAIRS (176 aa). One can recognise a TIR domain in the interval 639 to 782; that stretch reads ICYDAFVSYS…GFWLNLRAAI (144 aa). Residue Lys754 forms a Glycyl lysine isopeptide (Lys-Gly) (interchain with G-Cter in ubiquitin) linkage. The ATG16L1-binding motif motif lies at 761–778; sequence YLEWPVDETQQEGFWLNL.

Belongs to the Toll-like receptor family. Interacts with LY96, TLR1 and TLR6 (via extracellular domain). TLR2 seems to exist in heterodimers with either TLR1 or TLR6 before stimulation by the ligand. The heterodimers form bigger oligomers in response to their corresponding ligands as well as further heterotypic associations with other receptors such as CD14 and/or CD36. Binds MYD88 (via TIR domain). Interacts with TICAM1. Interacts with CNPY3. Interacts with ATG16L1. Interacts with PPP1R11. Interacts with TICAM2. Interacts with TIRAP. In terms of processing, ubiquitinated at Lys-754 by PPP1R11, leading to its degradation. Deubiquitinated by USP2. Post-translationally, glycosylation of Asn-442 is critical for secretion of the N-terminal ectodomain of TLR2.

Its subcellular location is the membrane. The protein resides in the cytoplasmic vesicle. The protein localises to the phagosome membrane. It is found in the membrane raft. In terms of biological role, cooperates with LY96 to mediate the innate immune response to bacterial lipoproteins and other microbial cell wall components. Cooperates with TLR1 or TLR6 to mediate the innate immune response to bacterial lipoproteins or lipopeptides. Acts via MYD88 and TRAF6, leading to NF-kappa-B activation, cytokine secretion and the inflammatory response. May also promote apoptosis in response to lipoproteins. Forms activation clusters composed of several receptors depending on the ligand, these clusters trigger signaling from the cell surface and subsequently are targeted to the Golgi in a lipid-raft dependent pathway. Forms the cluster TLR2:TLR6:CD14:CD36 in response to diacylated lipopeptides and TLR2:TLR1:CD14 in response to triacylated lipopeptides. This Bos taurus (Bovine) protein is Toll-like receptor 2 (TLR2).